Consider the following 172-residue polypeptide: Arginine repressor (172 aa).

Belongs to the ArgR family.

The protein resides in the cytoplasm. The protein operates within amino-acid biosynthesis; L-arginine biosynthesis [regulation]. Regulates arginine biosynthesis genes. The protein is Arginine repressor of Bifidobacterium adolescentis (strain ATCC 15703 / DSM 20083 / NCTC 11814 / E194a).